The primary structure comprises 134 residues: Small ribosomal subunit protein uS8c (134 aa).

The protein belongs to the universal ribosomal protein uS8 family. As to quaternary structure, part of the 30S ribosomal subunit.

It is found in the plastid. The protein localises to the chloroplast. In terms of biological role, one of the primary rRNA binding proteins, it binds directly to 16S rRNA central domain where it helps coordinate assembly of the platform of the 30S subunit. This is Small ribosomal subunit protein uS8c (rps8) from Lactuca sativa (Garden lettuce).